A 144-amino-acid polypeptide reads, in one-letter code: Small ribosomal subunit protein uS19 (144 aa).

Belongs to the universal ribosomal protein uS19 family.

Protein S19 forms a complex with S13 that binds strongly to the 16S ribosomal RNA. In Hyperthermus butylicus (strain DSM 5456 / JCM 9403 / PLM1-5), this protein is Small ribosomal subunit protein uS19.